Consider the following 390-residue polypeptide: Leucine aminopeptidase 1 (390 aa).

The N-terminal stretch at M1–S18 is a signal peptide. Residues Y19–V90 constitute a propeptide that is removed on maturation. The N-linked (GlcNAc...) asparagine glycan is linked to N120. 4 residues coordinate Zn(2+): H190, D209, E248, and D275. Residues C324 and C328 are joined by a disulfide bond. H357 serves as a coordination point for Zn(2+).

The protein belongs to the peptidase M28 family. M28E subfamily. As to quaternary structure, monomer. Zn(2+) serves as cofactor.

It localises to the secreted. Its function is as follows. Extracellular aminopeptidase that allows assimilation of proteinaceous substrates. The chain is Leucine aminopeptidase 1 (lap1) from Emericella nidulans (strain FGSC A4 / ATCC 38163 / CBS 112.46 / NRRL 194 / M139) (Aspergillus nidulans).